A 525-amino-acid polypeptide reads, in one-letter code: PE-PGRS family protein PE_PGRS47 (525 aa).

Positions 1–93 constitute a PE domain; sequence MSFVIAAPEF…AYSYASAEAA (93 aa). A disordered region spans residues 506–525; the sequence is VGGAGGLLEGQNGENGLLPS. The segment covering 514–525 has biased composition (low complexity); the sequence is EGQNGENGLLPS.

The protein belongs to the mycobacterial PE family. PGRS subfamily.

Its subcellular location is the secreted. The protein localises to the cell surface. It is found in the host cytoplasm. It localises to the host cytosol. Its function is as follows. Contributes to evasion of both innate and adaptive immunity. Inhibits autophagy in infected host phagocytes and inhibits major histocompatibility complex (MHC) class II antigen presentation by mycobacteria-infected dendritic cells. Has an important role in the growth and survival of M.tuberculosis, particularly during intracellular growth and in the later chronic phase of infection. This is PE-PGRS family protein PE_PGRS47 from Mycobacterium tuberculosis (strain ATCC 25618 / H37Rv).